Here is a 463-residue protein sequence, read N- to C-terminus: Rop guanine nucleotide exchange factor 4 (463 aa).

2 disordered regions span residues 1–25 (MESS…YRRT) and 55–87 (GHEE…SDID). Over residues 59 to 68 (DVSEDAEEPK) the composition is skewed to acidic residues. The span at 69 to 78 (DDVVNDVHGD) shows a compositional bias: basic and acidic residues. The PRONE domain occupies 84 to 463 (SDIDSAEDAE…VDRTVRNRDD (380 aa)).

In terms of assembly, interacts with ARAC10/ROP11. Expressed in root vascular tissue and trichoblast cell files. Expressed in root metaxylem cell files. Expressed in guard cells of cotyledons, rosette leaves, sepals, petal, stigmas and siliques. Expressed in root metaxylem cell files.

The protein localises to the cytoplasm. The protein resides in the cell membrane. Guanine-nucleotide exchange factor (GEF) that acts as an activator of Rop (Rho of plants) GTPases by promoting the exchange of GDP for GTP. In association with ROPGEF1, acts as a specific regulator of ARAC10/ROP11 function in ABA-mediated stomatal closure. The sequence is that of Rop guanine nucleotide exchange factor 4 (ROPGEF4) from Arabidopsis thaliana (Mouse-ear cress).